Consider the following 103-residue polypeptide: Small ribosomal subunit protein uS14c (103 aa).

A disordered region spans residues Lys-34 to Asn-56.

This sequence belongs to the universal ribosomal protein uS14 family. As to quaternary structure, part of the 30S ribosomal subunit.

It is found in the plastid. The protein localises to the chloroplast. Its function is as follows. Binds 16S rRNA, required for the assembly of 30S particles. The chain is Small ribosomal subunit protein uS14c from Saccharum hybrid (Sugarcane).